The chain runs to 160 residues: Transcription elongation factor GreA (160 aa).

Residues 49–77 (SEYQSAKDEQAFVEGRIQTLKNMIDNAEI) adopt a coiled-coil conformation.

Belongs to the GreA/GreB family.

In terms of biological role, necessary for efficient RNA polymerase transcription elongation past template-encoded arresting sites. The arresting sites in DNA have the property of trapping a certain fraction of elongating RNA polymerases that pass through, resulting in locked ternary complexes. Cleavage of the nascent transcript by cleavage factors such as GreA or GreB allows the resumption of elongation from the new 3'terminus. GreA releases sequences of 2 to 3 nucleotides. This chain is Transcription elongation factor GreA, found in Leuconostoc mesenteroides subsp. mesenteroides (strain ATCC 8293 / DSM 20343 / BCRC 11652 / CCM 1803 / JCM 6124 / NCDO 523 / NBRC 100496 / NCIMB 8023 / NCTC 12954 / NRRL B-1118 / 37Y).